A 377-amino-acid polypeptide reads, in one-letter code: Carbamoyl phosphate synthase small chain (377 aa).

The CPSase stretch occupies residues 1-186 (MNTPALLVLA…LGKGFVTPDK (186 aa)). The L-glutamine site is built by serine 47, glycine 238, and glycine 240. The Glutamine amidotransferase type-1 domain maps to 190 to 377 (HVVAYDFGVK…IGNMKAAKQA (188 aa)). Residue cysteine 266 is the Nucleophile of the active site. Residues leucine 267, glutamine 270, asparagine 308, glycine 310, and phenylalanine 311 each contribute to the L-glutamine site. Residues histidine 350 and glutamate 352 contribute to the active site.

This sequence belongs to the CarA family. Composed of two chains; the small (or glutamine) chain promotes the hydrolysis of glutamine to ammonia, which is used by the large (or ammonia) chain to synthesize carbamoyl phosphate. Tetramer of heterodimers (alpha,beta)4.

It carries out the reaction hydrogencarbonate + L-glutamine + 2 ATP + H2O = carbamoyl phosphate + L-glutamate + 2 ADP + phosphate + 2 H(+). The catalysed reaction is L-glutamine + H2O = L-glutamate + NH4(+). The protein operates within amino-acid biosynthesis; L-arginine biosynthesis; carbamoyl phosphate from bicarbonate: step 1/1. Its pathway is pyrimidine metabolism; UMP biosynthesis via de novo pathway; (S)-dihydroorotate from bicarbonate: step 1/3. Small subunit of the glutamine-dependent carbamoyl phosphate synthetase (CPSase). CPSase catalyzes the formation of carbamoyl phosphate from the ammonia moiety of glutamine, carbonate, and phosphate donated by ATP, constituting the first step of 2 biosynthetic pathways, one leading to arginine and/or urea and the other to pyrimidine nucleotides. The small subunit (glutamine amidotransferase) binds and cleaves glutamine to supply the large subunit with the substrate ammonia. In Neisseria gonorrhoeae, this protein is Carbamoyl phosphate synthase small chain.